The sequence spans 24 residues: Glutathione S-transferase (24 aa).

It belongs to the GST superfamily. As to quaternary structure, monomer and homodimer.

It is found in the cytoplasm. The catalysed reaction is RX + glutathione = an S-substituted glutathione + a halide anion + H(+). Its function is as follows. Conjugation of reduced glutathione to a wide number of exogenous and endogenous hydrophobic electrophiles. The protein is Glutathione S-transferase of Pseudomonas sp. (strain CF600).